Reading from the N-terminus, the 853-residue chain is Aminotransferase PigE (853 aa).

503 to 504 (GT) is a binding site for pyridoxal 5'-phosphate. Lysine 645 carries the N6-(pyridoxal phosphate)lysine modification. Threonine 680 contacts pyridoxal 5'-phosphate.

This sequence belongs to the class-III pyridoxal-phosphate-dependent aminotransferase family. In terms of assembly, homodimer. The cofactor is pyridoxal 5'-phosphate.

It functions in the pathway antibiotic biosynthesis; prodigiosin biosynthesis. Functionally, involved in the biosynthesis of 2-methyl-3-n-amyl-pyrrole (MAP), one of the terminal products involved in the biosynthesis of the red antibiotic prodigiosin (Pig). Catalyzes the transamination to the aldehyde group of 3-acetyloctanal, resulting in an aminoketone, which spontaneously cyclizes to yield the dihydro form of MAP (H2MAP). The chain is Aminotransferase PigE from Serratia sp. (strain ATCC 39006) (Prodigiosinella confusarubida).